Here is a 751-residue protein sequence, read N- to C-terminus: Photosystem I P700 chlorophyll a apoprotein A1 (751 aa).

Transmembrane regions (helical) follow at residues 71–94 (VFSA…FHGA), 157–180 (LYCT…FHYH), 196–220 (LNHH…HVSL), 292–310 (IAHH…GHMY), 347–370 (WHAQ…HHMY), 386–412 (LSLF…IFMV), 434–456 (AIIS…LYIH), and 532–550 (FLVH…LILL). Positions 574 and 583 each coordinate [4Fe-4S] cluster. The next 2 membrane-spanning stretches (helical) occupy residues 590 to 611 (HVFL…HFSW) and 665 to 687 (LSAY…MFLF). His676 serves as a coordination point for chlorophyll a'. Residues Met684 and Tyr692 each contribute to the chlorophyll a site. Trp693 is a binding site for phylloquinone. The helical transmembrane segment at 725 to 745 (AVGVTHYLLGGIATTWAFFLA) threads the bilayer.

Belongs to the PsaA/PsaB family. The PsaA/B heterodimer binds the P700 chlorophyll special pair and subsequent electron acceptors. PSI consists of a core antenna complex that captures photons, and an electron transfer chain that converts photonic excitation into a charge separation. The eukaryotic PSI reaction center is composed of at least 11 subunits. It depends on P700 is a chlorophyll a/chlorophyll a' dimer, A0 is one or more chlorophyll a, A1 is one or both phylloquinones and FX is a shared 4Fe-4S iron-sulfur center. as a cofactor.

Its subcellular location is the plastid. The protein localises to the chloroplast thylakoid membrane. It catalyses the reaction reduced [plastocyanin] + hnu + oxidized [2Fe-2S]-[ferredoxin] = oxidized [plastocyanin] + reduced [2Fe-2S]-[ferredoxin]. Functionally, psaA and PsaB bind P700, the primary electron donor of photosystem I (PSI), as well as the electron acceptors A0, A1 and FX. PSI is a plastocyanin-ferredoxin oxidoreductase, converting photonic excitation into a charge separation, which transfers an electron from the donor P700 chlorophyll pair to the spectroscopically characterized acceptors A0, A1, FX, FA and FB in turn. Oxidized P700 is reduced on the lumenal side of the thylakoid membrane by plastocyanin. This is Photosystem I P700 chlorophyll a apoprotein A1 from Zea mays (Maize).